The primary structure comprises 450 residues: MTPISQRISQKSPKLRETKQIQMTTTDKSAGIVTDSEAGPETSLLLNPHEGSTKKAPSDSYHFAYIIYFTLGVGFLLPWNAFITAVDYFSYLYPSTAVDRIFAVIYMLVALVCLFVIVVFYAHKSLASFRINLGLLLFVIALLVVPVLDLVYVKGQVGLYAGFDVTSAAVALSGLGDALMQGGLIGVAGEMPERYMQAVVAGTAGSGVLVSLLRILTKAVYPQDPDGLRKSANLYFAVGIVVMVICAVFYNVAHKLPVIKFHEERKNEELIREKSEEKGSLTGLAWRTTLWDIVTKVKSHGFGIVLLYMVTLSIFPGYITEDVHSELLTDWYPILLIAAYNVFDLVGKCLTAVFMLEDEKIAVGGSIARLLFYPLFWGCLHGPMFLRTEIPVTILTCLLGLTNGYLTSVLMILAPKSVPLRHSETAGIVTVMFLVVGLASGSVIAWFWVI.

The next 11 helical transmembrane spans lie at 63 to 83, 101 to 121, 133 to 153, 168 to 188, 196 to 216, 234 to 254, 300 to 320, 334 to 354, 361 to 381, 394 to 414, and 430 to 450; these read FAYI…NAFI, IFAV…VVFY, LGLL…LVYV, AAVA…IGVA, MQAV…LRIL, LYFA…NVAH, HGFG…GYIT, ILLI…TAVF, IAVG…GCLH, ILTC…MILA, and TVMF…FWVI.

Belongs to the SLC29A/ENT transporter (TC 2.A.57) family. In terms of tissue distribution, in young seedlings, expressed in root elongation zone, root cortex, root-hair, at the transition to the shoot and cotyledons. Expressed in hydathodes of fully developed leaves and pollen.

The protein localises to the vacuole membrane. Its function is as follows. Nucleoside transporter involved in adenosine transport and required for nucleotide metabolism which influences growth and pollen germination. Has high affinity for adenosine when expressed in a heterologous system (yeast). The chain is Equilibrative nucleotide transporter 1 (ENT1) from Arabidopsis thaliana (Mouse-ear cress).